Here is a 420-residue protein sequence, read N- to C-terminus: Cysteate-C-fatty acyltransferase (420 aa).

Residues 114 to 115, histidine 219, threonine 247, and alanine 249 each bind pyridoxal 5'-phosphate; that span reads GY. Lysine 250 carries the post-translational modification N6-(pyridoxal phosphate)lysine.

It belongs to the class-II pyridoxal-phosphate-dependent aminotransferase family. It depends on pyridoxal 5'-phosphate as a cofactor.

It carries out the reaction isopentadecanoyl-CoA + L-cysteate + H(+) = 3-oxocapnine + CO2 + CoA. It functions in the pathway lipid metabolism. Functionally, transferase involved in the biosynthesis of capnine, a sulfonolipid present in the outer membrane of gliding Bacteroidetes and essential for gliding motility. Catalyzes the formation of 3-dehydrocapnine from cysteate and isopentadecanoyl-CoA (13-methyl-myristoyl-CoA). In vitro, products are also detected when 13-methyl-myristic acid is substituted with tridecylic acid, myristic acid, pentadecanoic acid or palmitic acid. The sequence is that of Cysteate-C-fatty acyltransferase from Capnocytophaga ochracea (strain ATCC 27872 / DSM 7271 / CCUG 9716 / JCM 12966 / NCTC 12371 / SS31 / VPI 2845) (Bacteroides ochraceus).